We begin with the raw amino-acid sequence, 155 residues long: Microsomal glutathione S-transferase 1 (155 aa).

Over 3-9 (DLTELMK) the chain is Lumenal. Residues 10 to 33 (NEVFMAFASYATIVLSKMMFMSTA) form a helical membrane-spanning segment. Residues 34–62 (TAFYRLTRKVFANPEDCSSFGKGENAKKY) are Cytoplasmic-facing. R38 lines the glutathione pocket. 3 positions are modified to N6-acetyllysine: K42, K55, and K60. Residues 63-96 (LRTDERVERVRRAHLNDLENIVPFLGIGLLYSLS) form a helical membrane-spanning segment. Glutathione contacts are provided by R73, R74, H76, and E81. Topologically, residues 97–99 (GPD) are lumenal. The chain crosses the membrane as a helical span at residues 100-123 (LSTAILHFRLFVGARIYHTIAYLT). Residue Y121 participates in glutathione binding. Residues 124–128 (PLPQP) lie on the Cytoplasmic side of the membrane. Residues 129–148 (NRGLAFFLGYGVTLSMAYRL) form a helical membrane-spanning segment. Residues 149–155 (LKSRLYL) are Lumenal-facing.

It belongs to the MAPEG family. Homotrimer; The trimer binds only one molecule of glutathione.

The protein localises to the endoplasmic reticulum membrane. Its subcellular location is the mitochondrion outer membrane. The enzyme catalyses RX + glutathione = an S-substituted glutathione + a halide anion + H(+). Conjugation of reduced glutathione to a wide number of exogenous and endogenous hydrophobic electrophiles. This chain is Microsomal glutathione S-transferase 1 (MGST1), found in Sus scrofa (Pig).